A 542-amino-acid polypeptide reads, in one-letter code: Katanin p60 ATPase-containing subunit A-like 2 (542 aa).

Positions 25-57 constitute a LisH domain; it reads RRKNLLILIMHYLLQEGYMDSANSLEQETKISL. Disordered regions lie at residues 94-126 and 142-168; these read LDHD…RIAQ and HAHQ…ASEI. Polar residues predominate over residues 114–126; it reads GSNSTQGLPRIAQ. An ATP-binding site is contributed by 298–305; sequence GPPGTGKT.

Belongs to the AAA ATPase family. Katanin p60 subunit A1 subfamily. A-like 2 sub-subfamily.

It is found in the cytoplasm. Its subcellular location is the cytoskeleton. The protein resides in the spindle. It localises to the spindle pole. The enzyme catalyses n ATP + n H2O + a microtubule = n ADP + n phosphate + (n+1) alpha/beta tubulin heterodimers.. Severs microtubules in vitro in an ATP-dependent manner. This activity may promote rapid reorganization of cellular microtubule arrays. The protein is Katanin p60 ATPase-containing subunit A-like 2 (katnal2) of Xenopus tropicalis (Western clawed frog).